The following is a 1171-amino-acid chain: Protein diaphanous homolog 3 (1171 aa).

Basic and acidic residues predominate over residues 1–15 (MERHRARALGRDSKS). The segment at 1–40 (MERHRARALGRDSKSSRRKGLQSAPPAGPYEPGEKRPKLH) is disordered. The Nuclear localization signal motif lies at 16–39 (SRRKGLQSAPPAGPYEPGEKRPKL). Phosphothreonine is present on Thr-47. A Phosphoserine modification is found at Ser-56. A disordered region spans residues 60–95 (PGSKKERPPLPHLKTVSGISDSSSLSSETMENNPKA). Positions 76 to 86 (SGISDSSSLSS) are enriched in low complexity. Positions 93-455 (PKALPESEVL…QIVLHRDGTD (363 aa)) constitute a GBD/FH3 domain. Ser-154 is modified (phosphoserine). Coiled coils occupy residues 373–403 (EHKE…YSML) and 478–533 (QAKL…FGAL). The disordered stretch occupies residues 532–601 (ALPPGTKIPL…PPPPLGFLGG (70 aa)). Residues 540-610 (PLQPSVEGEA…GQSSIPLNLP (71 aa)) enclose the FH1 domain. Pro residues predominate over residues 553–596 (ALPPAPPALSGGVPPPPPPPPPPPPPLPGMPMPFGGPVPPPPPL). Position 604 is a phosphoserine (Ser-604). In terms of domain architecture, FH2 spans 615–1013 (PKKEFKPEIS…EKRARIAKER (399 aa)). Coiled coils occupy residues 887 to 918 (DKAS…LETF) and 988 to 1038 (MLAL…GDET). The 31-residue stretch at 1036–1066 (DETGVMDSLLEALQSGAAFRDRRKRTPKLKD) folds into the DAD domain. Ser-1072 and Ser-1157 each carry phosphoserine. The short motif at 1162 to 1171 (EALLARLRAL) is the Nuclear export signal element.

It belongs to the formin homology family. Diaphanous subfamily. Ubiquitinated.

The protein resides in the cytoplasm. It is found in the nucleus. Actin nucleation and elongation factor required for the assembly of F-actin structures, such as actin cables and stress fibers. Required for cytokinesis, stress fiber formation and transcriptional activation of the serum response factor. Binds to GTP-bound form of Rho and to profilin: acts in a Rho-dependent manner to recruit profilin to the membrane, where it promotes actin polymerization. DFR proteins couple Rho and Src tyrosine kinase during signaling and the regulation of actin dynamics. Also acts as an actin nucleation and elongation factor in the nucleus by promoting nuclear actin polymerization inside the nucleus to drive serum-dependent SRF-MRTFA activity. The polypeptide is Protein diaphanous homolog 3 (Diaph3) (Mus musculus (Mouse)).